A 209-amino-acid chain; its full sequence is Large ribosomal subunit protein uL3 (209 aa).

Q150 carries the post-translational modification N5-methylglutamine.

It belongs to the universal ribosomal protein uL3 family. Part of the 50S ribosomal subunit. Forms a cluster with proteins L14 and L19. Post-translationally, methylated by PrmB.

Its function is as follows. One of the primary rRNA binding proteins, it binds directly near the 3'-end of the 23S rRNA, where it nucleates assembly of the 50S subunit. This Pasteurella multocida (strain Pm70) protein is Large ribosomal subunit protein uL3.